A 413-amino-acid chain; its full sequence is Acetate kinase (413 aa).

A Mg(2+)-binding site is contributed by Asn-7. Lys-14 lines the ATP pocket. Residue Arg-98 participates in substrate binding. Catalysis depends on Asp-157, which acts as the Proton donor/acceptor. ATP contacts are provided by residues 216–220, 291–293, and 339–343; these read HIGNG, DLR, and GVGEN. Glu-392 contacts Mg(2+).

The protein belongs to the acetokinase family. As to quaternary structure, homodimer. Mg(2+) serves as cofactor. Mn(2+) is required as a cofactor.

It is found in the cytoplasm. It carries out the reaction acetate + ATP = acetyl phosphate + ADP. Its pathway is metabolic intermediate biosynthesis; acetyl-CoA biosynthesis; acetyl-CoA from acetate: step 1/2. In terms of biological role, catalyzes the formation of acetyl phosphate from acetate and ATP. Can also catalyze the reverse reaction. The sequence is that of Acetate kinase from Synechocystis sp. (strain ATCC 27184 / PCC 6803 / Kazusa).